We begin with the raw amino-acid sequence, 539 residues long: CTP synthase (539 aa).

The tract at residues 1–267 is amidoligase domain; it reads MTKFIFVTGG…DDLVIKRLDL (267 aa). Ser-13 serves as a coordination point for CTP. Ser-13 is a UTP binding site. 14–19 serves as a coordination point for ATP; the sequence is SLGKGI. Tyr-54 contributes to the L-glutamine binding site. Asp-71 provides a ligand contact to ATP. Residues Asp-71 and Glu-141 each contribute to the Mg(2+) site. CTP-binding positions include 148–150, 188–193, and Lys-224; these read DIE and KTKPTQ. Residues 188–193 and Lys-224 each bind UTP; that span reads KTKPTQ. Residue 240–242 coordinates ATP; the sequence is RDA. Positions 293-535 constitute a Glutamine amidotransferase type-1 domain; sequence TIGLVGKYVS…IEAANKYKEA (243 aa). Gly-355 contacts L-glutamine. Cys-382 acts as the Nucleophile; for glutamine hydrolysis in catalysis. L-glutamine-binding positions include 383–386, Glu-406, and Arg-463; that span reads LGMQ. Catalysis depends on residues His-508 and Glu-510.

Belongs to the CTP synthase family. In terms of assembly, homotetramer.

It catalyses the reaction UTP + L-glutamine + ATP + H2O = CTP + L-glutamate + ADP + phosphate + 2 H(+). The enzyme catalyses L-glutamine + H2O = L-glutamate + NH4(+). It carries out the reaction UTP + NH4(+) + ATP = CTP + ADP + phosphate + 2 H(+). It functions in the pathway pyrimidine metabolism; CTP biosynthesis via de novo pathway; CTP from UDP: step 2/2. Its activity is regulated as follows. Allosterically activated by GTP, when glutamine is the substrate; GTP has no effect on the reaction when ammonia is the substrate. The allosteric effector GTP functions by stabilizing the protein conformation that binds the tetrahedral intermediate(s) formed during glutamine hydrolysis. Inhibited by the product CTP, via allosteric rather than competitive inhibition. Its function is as follows. Catalyzes the ATP-dependent amination of UTP to CTP with either L-glutamine or ammonia as the source of nitrogen. Regulates intracellular CTP levels through interactions with the four ribonucleotide triphosphates. In Staphylococcus carnosus (strain TM300), this protein is CTP synthase.